The chain runs to 512 residues: Gamma-aminobutyric acid receptor subunit beta-2 (512 aa).

The N-terminal stretch at Met1 to Gln25 is a signal peptide. At Ser26 to Asn241 the chain is on the extracellular side. Asn32 and Asn104 each carry an N-linked (GlcNAc...) asparagine glycan. A histamine-binding site is contributed by Tyr121. An intrachain disulfide couples Cys160 to Cys174. A glycan (N-linked (GlcNAc...) asparagine) is linked at Asn173. Residues Ser180–Tyr181 and Thr226 contribute to the histamine site. 4-aminobutanoate is bound by residues Tyr181 and Thr226. Residues Ile242–Val262 traverse the membrane as a helical segment. The Cytoplasmic segment spans residues Ser263 to Ala272. A helical transmembrane segment spans residues Ala273–Leu292. Residues Arg293 to Met310 are Extracellular-facing. The helical transmembrane segment at Gly311–Phe331 threads the bilayer. Residues Gly332–Trp490 lie on the Cytoplasmic side of the membrane. The residue at position 441 (Tyr441) is a Phosphotyrosine. Residues Ser491–Val511 form a helical membrane-spanning segment. Asn512 is a topological domain (extracellular).

It belongs to the ligand-gated ion channel (TC 1.A.9) family. Gamma-aminobutyric acid receptor (TC 1.A.9.5) subfamily. GABRB2 sub-subfamily. Heteropentamer, formed by a combination of alpha (GABRA1-6), beta (GABRB1-3), gamma (GABRG1-3), delta (GABRD), epsilon (GABRE), rho (GABRR1-3), pi (GABRP) and theta (GABRQ) chains, each subunit exhibiting distinct physiological and pharmacological properties. Interacts with UBQLN1. May interact with KIF21B. Identified in a complex of 720 kDa composed of LHFPL4, NLGN2, GABRA1, GABRB2, GABRG2 and GABRB3. As to expression, isoform 1 and isoform 2 show reduced expression in schizophrenic brain. Isoform 3 shows increased expression in schizophrenic and bipolar disorder brains while isoform 4 shows reduced expression.

Its subcellular location is the postsynaptic cell membrane. The protein localises to the cell membrane. It is found in the cytoplasmic vesicle membrane. The catalysed reaction is chloride(in) = chloride(out). Allosterically activated by benzodiazepines. Allosterically activated by the anesthetic etomidate. Inhibited by the antagonist bicuculline. Potentiated by histamine. In terms of biological role, beta subunit of the heteropentameric ligand-gated chloride channel gated by gamma-aminobutyric acid (GABA), a major inhibitory neurotransmitter in the brain. GABA-gated chloride channels, also named GABA(A) receptors (GABAAR), consist of five subunits arranged around a central pore and contain GABA active binding site(s) located at the alpha and beta subunit interface(s). When activated by GABA, GABAARs selectively allow the flow of chloride anions across the cell membrane down their electrochemical gradient. Chloride influx into the postsynaptic neuron following GABAAR opening decreases the neuron ability to generate a new action potential, thereby reducing nerve transmission. GABAARs containing alpha-1 and beta-2 or -3 subunits exhibit synaptogenic activity; the gamma-2 subunit being necessary but not sufficient to induce rapid synaptic contacts formation. Extrasynaptic beta-2 receptors contribute to the tonic GABAergic inhibition. Beta-containing GABAARs can simultaneously bind GABA and histamine where histamine binds at the interface of two neighboring beta subunits, which may be involved in the regulation of sleep and wakefulness. In Homo sapiens (Human), this protein is Gamma-aminobutyric acid receptor subunit beta-2.